The chain runs to 173 residues: VQ motif-containing protein 31 (173 aa).

A VQ motif is present at residues 27-36; it reads FREIVQRLTG. Phosphothreonine is present on Thr-46. Disordered regions lie at residues 76–105 and 143–173; these read EIVK…TSPV and LHPS…SGKP. Residues 86 to 105 are compositionally biased toward polar residues; it reads PTGTTPSSKSGNTNLLTSPV. Phosphoserine is present on residues Ser-92, Ser-103, Ser-146, and Ser-149. A compositionally biased stretch (low complexity) spans 154-165; it reads TEPELLTLFPLT. The residue at position 165 (Thr-165) is a Phosphothreonine. Residues Ser-166 and Ser-170 each carry the phosphoserine modification.

Post-translationally, phosphorylated on serine and threonine residues by MPK6.

Its subcellular location is the nucleus. May modulate WRKY transcription factor activities. In Arabidopsis thaliana (Mouse-ear cress), this protein is VQ motif-containing protein 31.